We begin with the raw amino-acid sequence, 226 residues long: Putative pyridoxamine 5'-phosphate oxidase (226 aa).

Pyridoxal 5'-phosphate is bound at residue 16 to 19 (LNSH). 72 to 75 (RMVL) provides a ligand contact to FMN. Residue Lys77 coordinates pyridoxal 5'-phosphate. FMN contacts are provided by residues 87–88 (YT), 93–94 (RK), and Gln116. Pyridoxal 5'-phosphate is bound by residues Tyr134, Arg138, and Ser142. FMN contacts are provided by residues 151 to 152 (QS) and Trp199. 205–207 (RLH) serves as a coordination point for pyridoxal 5'-phosphate. Residue Arg209 coordinates FMN.

The protein belongs to the pyridoxamine 5'-phosphate oxidase family. In terms of assembly, homodimer. Requires FMN as cofactor.

The catalysed reaction is pyridoxamine 5'-phosphate + O2 + H2O = pyridoxal 5'-phosphate + H2O2 + NH4(+). The enzyme catalyses pyridoxine 5'-phosphate + O2 = pyridoxal 5'-phosphate + H2O2. It functions in the pathway cofactor metabolism; pyridoxal 5'-phosphate salvage; pyridoxal 5'-phosphate from pyridoxamine 5'-phosphate: step 1/1. Its pathway is cofactor metabolism; pyridoxal 5'-phosphate salvage; pyridoxal 5'-phosphate from pyridoxine 5'-phosphate: step 1/1. Catalyzes the oxidation of either pyridoxine 5'-phosphate (PNP) or pyridoxamine 5'-phosphate (PMP) into pyridoxal 5'-phosphate (PLP). The sequence is that of Putative pyridoxamine 5'-phosphate oxidase from Caenorhabditis elegans.